The chain runs to 330 residues: Carbonic anhydrase 1 (330 aa).

The tract at residues 1 to 109 (MSTASAFAIN…AAARIDQITA (109 aa)) is chloroplast transit peptide-like.

Belongs to the beta-class carbonic anhydrase family. As to quaternary structure, homohexamer.

It localises to the cytoplasm. It carries out the reaction hydrogencarbonate + H(+) = CO2 + H2O. Its function is as follows. Reversible hydration of carbon dioxide. The protein is Carbonic anhydrase 1 of Flaveria linearis (Narrowleaf yellowtops).